The primary structure comprises 337 residues: Putative carboxypeptidase TP_0688 (337 aa).

Ser-118 acts as the Nucleophile in catalysis. Catalysis depends on charge relay system residues Glu-234 and His-302.

It belongs to the peptidase S66 family.

The polypeptide is Putative carboxypeptidase TP_0688 (Treponema pallidum (strain Nichols)).